The sequence spans 400 residues: Enoyl-[acyl-carrier-protein] reductase [NADH] (400 aa).

NAD(+) is bound by residues 48-53 (GSSSGY), 74-75 (FE), 111-112 (DA), and 139-140 (LA). Y225 is a binding site for substrate. Y235 serves as the catalytic Proton donor. Residues K244 and 273–275 (VVT) each bind NAD(+).

It belongs to the TER reductase family. As to quaternary structure, monomer.

It carries out the reaction a 2,3-saturated acyl-[ACP] + NAD(+) = a (2E)-enoyl-[ACP] + NADH + H(+). The protein operates within lipid metabolism; fatty acid biosynthesis. In terms of biological role, involved in the final reduction of the elongation cycle of fatty acid synthesis (FAS II). Catalyzes the reduction of a carbon-carbon double bond in an enoyl moiety that is covalently linked to an acyl carrier protein (ACP). In Shewanella baltica (strain OS223), this protein is Enoyl-[acyl-carrier-protein] reductase [NADH].